The primary structure comprises 486 residues: UDP-N-acetylmuramate--L-alanine ligase (486 aa).

129 to 135 contacts ATP; it reads GTHGKTT.

This sequence belongs to the MurCDEF family.

The protein localises to the cytoplasm. It carries out the reaction UDP-N-acetyl-alpha-D-muramate + L-alanine + ATP = UDP-N-acetyl-alpha-D-muramoyl-L-alanine + ADP + phosphate + H(+). Its pathway is cell wall biogenesis; peptidoglycan biosynthesis. Cell wall formation. The protein is UDP-N-acetylmuramate--L-alanine ligase of Vibrio vulnificus (strain CMCP6).